Consider the following 395-residue polypeptide: MWLLLITSVISTFGGAHGLFGKLGPGNPEANMNISQMITYWGYPCQEYEVVTEDGYILGVYRIPHGKNNSENIGKRPVVYLQHGLIASATNWIANLPNNSLAFMLADAGYDVWLGNSRGNTWSRKNVYYSPDSVEFWAFSFDEMAKYDLPATINFIVQKTGQEKIHYVGHSQGTTIGFIAFSTNPTLAKKIKTFYALAPVATVKYTQSPLKKISFIPTFLFKLMFGKKMFLPHTYFDDFLGTEVCSREVLDLLCSNTLFIFCGFDKKNLNVSRFDVYLGHNPAGTSVQDFLHWAQLVRSGKFQAFNWGSPSQNMLHYNQKTPPEYDVSAMTVPVAVWNGGNDILADPQDVAMLLPKLSNLLFHKEILAYNHLDFIWAMDAPQEVYNEMISMMAED.

Residues 1-18 form the signal peptide; sequence MWLLLITSVISTFGGAHG. N-linked (GlcNAc...) asparagine glycans are attached at residues Asn33, Asn68, and Asn98. Residues 77 to 376 enclose the AB hydrolase-1 domain; that stretch reads PVVYLQHGLI…LAYNHLDFIW (300 aa). The active-site Nucleophile is Ser171. A disulfide bridge connects residues Cys245 and Cys254. A glycan (N-linked (GlcNAc...) asparagine) is linked at Asn270. Residues Asp342 and His371 each act as charge relay system in the active site.

Belongs to the AB hydrolase superfamily. Lipase family. As to expression, secreted by the serous (von Ebner's) glands at the back of the rat tongue.

It localises to the secreted. It catalyses the reaction a triacylglycerol + H2O = a diacylglycerol + a fatty acid + H(+). It carries out the reaction 1,2,3-tri-(9Z-octadecenoyl)-glycerol + H2O = 1,2-di-(9Z-octadecenoyl)-sn-glycerol + (9Z)-octadecenoate + H(+). The enzyme catalyses 1,2,3-trioctanoylglycerol + H2O = 1,2-dioctanoyl-sn-glycerol + octanoate + H(+). Functionally, catalyzes the hydrolysis of triacylglycerols to yield free fatty acids, diacylglycerol, monoacylglycerol, and glycerol. Shows a preferential hydrolysis at the sn-3 position of triacylglycerol. This Rattus norvegicus (Rat) protein is Gastric triacylglycerol lipase (Lipf).